The sequence spans 933 residues: Serine/threonine-protein kinase PknD (933 aa).

Positions 4-291 (YDIIRMIGKG…ALKADIEQHL (288 aa)) constitute a Protein kinase domain. ATP contacts are provided by residues 10 to 18 (IGKGGMGEV) and K33. D138 functions as the Proton acceptor in the catalytic mechanism.

The protein belongs to the protein kinase superfamily. Ser/Thr protein kinase family. Post-translationally, autophosphorylated on serine and threonine residues.

The catalysed reaction is L-seryl-[protein] + ATP = O-phospho-L-seryl-[protein] + ADP + H(+). It carries out the reaction L-threonyl-[protein] + ATP = O-phospho-L-threonyl-[protein] + ADP + H(+). Its function is as follows. Together with the serine/threonine kinase Pkn1, may play a role in the specific interactions with host proteins during intracellular growth. The protein is Serine/threonine-protein kinase PknD of Chlamydia abortus (strain DSM 27085 / S26/3) (Chlamydophila abortus).